The following is a 339-amino-acid chain: Dihydroorotate dehydrogenase (quinone) (339 aa).

FMN-binding positions include 62–66 (AGMDK) and T86. Residue K66 coordinates substrate. 111 to 115 (NRMGF) contributes to the substrate binding site. FMN contacts are provided by N139 and N172. N172 lines the substrate pocket. Residue S175 is the Nucleophile of the active site. Substrate is bound at residue N177. Residues K217 and T245 each coordinate FMN. 246 to 247 (NT) lines the substrate pocket. Residues G268, G297, and 318–319 (YS) each bind FMN.

This sequence belongs to the dihydroorotate dehydrogenase family. Type 2 subfamily. Monomer. Requires FMN as cofactor.

The protein resides in the cell membrane. The enzyme catalyses (S)-dihydroorotate + a quinone = orotate + a quinol. Its pathway is pyrimidine metabolism; UMP biosynthesis via de novo pathway; orotate from (S)-dihydroorotate (quinone route): step 1/1. Functionally, catalyzes the conversion of dihydroorotate to orotate with quinone as electron acceptor. The chain is Dihydroorotate dehydrogenase (quinone) from Shewanella oneidensis (strain ATCC 700550 / JCM 31522 / CIP 106686 / LMG 19005 / NCIMB 14063 / MR-1).